Reading from the N-terminus, the 173-residue chain is Protein tyrosine phosphatase type IVA 3 (173 aa).

The 154-residue stretch at A8 to K161 folds into the Tyrosine-protein phosphatase domain. A disulfide bridge links C49 with C104. D72 serves as the catalytic Proton donor. Catalysis depends on C104, which acts as the Phosphocysteine intermediate. R110 is a binding site for substrate. Residue C170 is modified to Cysteine methyl ester. The S-farnesyl cysteine moiety is linked to residue C170. A propeptide spans C171 to M173 (removed in mature form).

This sequence belongs to the protein-tyrosine phosphatase family. In terms of assembly, interacts with tubulin. Post-translationally, farnesylated. Farnesylation is required for membrane targeting. Unfarnesylated forms are shifted into the nucleus. As to expression, present in the small intestine, where it is located in the differentiated epithelial cells of the villus but not in the proliferating crypt cells (at protein level). Expressed in heart and skeletal muscle, and at lower levels in lung, spleen and testis.

It is found in the cell membrane. It localises to the early endosome. The enzyme catalyses O-phospho-L-tyrosyl-[protein] + H2O = L-tyrosyl-[protein] + phosphate. With respect to regulation, inhibited by sodium orthovanadate and peroxovanadium compounds, and by pentamidine. Protein tyrosine phosphatase which stimulates progression from G1 into S phase during mitosis. Enhances cell proliferation, cell motility and invasive activity, and promotes cancer metastasis. May be involved in the progression of cardiac hypertrophy by inhibiting intracellular calcium mobilization in response to angiotensin II. The chain is Protein tyrosine phosphatase type IVA 3 (Ptp4a3) from Mus musculus (Mouse).